Reading from the N-terminus, the 215-residue chain is 7-cyano-7-deazaguanine synthase (215 aa).

8–18 (LSAGLDSTVSL) contributes to the ATP binding site. Residues Cys191, Cys199, Cys202, and Cys205 each coordinate Zn(2+).

The protein belongs to the QueC family. As to quaternary structure, homodimer. Requires Zn(2+) as cofactor.

The enzyme catalyses 7-carboxy-7-deazaguanine + NH4(+) + ATP = 7-cyano-7-deazaguanine + ADP + phosphate + H2O + H(+). Its pathway is purine metabolism; 7-cyano-7-deazaguanine biosynthesis. In terms of biological role, catalyzes the ATP-dependent conversion of 7-carboxy-7-deazaguanine (CDG) to 7-cyano-7-deazaguanine (preQ(0)). This chain is 7-cyano-7-deazaguanine synthase, found in Carboxydothermus hydrogenoformans (strain ATCC BAA-161 / DSM 6008 / Z-2901).